The following is an 83-amino-acid chain: MAAERPQNLQDTFLNFVRKNKVPLTIFLVNGVKLQGVVTWFDNFCVLLRRDGHSQLVYKHAISTIMPGQPIQMFESGEDAAAS.

A Sm domain is found at 11–71 (DTFLNFVRKN…ISTIMPGQPI (61 aa)).

Belongs to the Hfq family. As to quaternary structure, homohexamer.

Functionally, RNA chaperone that binds small regulatory RNA (sRNAs) and mRNAs to facilitate mRNA translational regulation in response to envelope stress, environmental stress and changes in metabolite concentrations. Also binds with high specificity to tRNAs. This Methylocella silvestris (strain DSM 15510 / CIP 108128 / LMG 27833 / NCIMB 13906 / BL2) protein is RNA-binding protein Hfq.